A 622-amino-acid polypeptide reads, in one-letter code: Iron transport multicopper oxidase fio1 (622 aa).

A signal peptide spans 1 to 22 (MNKFFSFPILGLLLTCVRFVVA). Residues 23 to 553 (KERLFEWNVT…GEMPAGWTSK (531 aa)) lie on the Extracellular side of the membrane. N-linked (GlcNAc...) asparagine glycosylation is found at asparagine 30 and asparagine 79. Plastocyanin-like domains are found at residues 49-147 (IGVN…FIIN) and 194-304 (TGLF…LSYN). Positions 85 and 87 each coordinate Cu cation. 2 N-linked (GlcNAc...) asparagine glycosylation sites follow: asparagine 117 and asparagine 123. Cu cation-binding residues include histidine 129 and histidine 131. N-linked (GlcNAc...) asparagine glycosylation is found at asparagine 198, asparagine 202, asparagine 234, asparagine 269, asparagine 296, asparagine 338, asparagine 360, and asparagine 376. The 113-residue stretch at 386 to 498 (EPVTYGPYTN…SGLLATFIEA (113 aa)) folds into the Plastocyanin-like 3 domain. The Cu cation site is built by histidine 417, histidine 420, histidine 422, histidine 480, cysteine 481, histidine 482, and histidine 486. N-linked (GlcNAc...) asparagine glycosylation is present at asparagine 532. Residues 554-574 (AIGTMAACVISACIGMGSIIF) form a helical membrane-spanning segment. Topologically, residues 575–622 (YGASIHPVPTEELDENDDLQEAALENAAMFLDTDKAVEKVVEGKDEIK) are cytoplasmic.

The protein belongs to the multicopper oxidase family. The cofactor is Cu cation.

It localises to the cell membrane. Could be an iron transport multicopper oxidase, which is required for Fe(2+) high affinity uptake. May be required to oxidize Fe(2+) and release it from the transporter. Essential component of copper-dependent iron transport. This is Iron transport multicopper oxidase fio1 (fio1) from Schizosaccharomyces pombe (strain 972 / ATCC 24843) (Fission yeast).